Reading from the N-terminus, the 245-residue chain is CMRF35-like molecule 3 (245 aa).

An N-terminal signal peptide occupies residues 1-18 (MWQFPALLFLFLPGCCTA). The region spanning 19-124 (QDPVTGPEEV…TDPMFKVNVN (106 aa)) is the Ig-like V-type domain. Topologically, residues 19–189 (QDPVTGPEEV…FIWSLLSSIS (171 aa)) are extracellular. A disulfide bridge links C40 with C108. Important for maintaining surface expression and for interaction with FCER1G regions lie at residues 177-182 (NSLFIW) and 189-198 (SFLLMVFVVV). A helical membrane pass occupies residues 190–210 (FLLMVFVVVPLLLSMLSAVLW). The Cytoplasmic segment spans residues 211–245 (VNRPQRHYGGGEIGLVETHRSDALDGEKHFPGDEK).

This sequence belongs to the CD300 family. Interacts with FCER1G; the interaction may be indirect. Interacts with TLR9. In terms of tissue distribution, highly expressed in bone marrow-derived mast cells and macrophages, peripheral blood monocytes and CD11c+ cells, with weaker expression detected in CD11b cells in bone marrow and peripheral blood. Not detected in B220+ cells in bone marrow or spleen, in Thy-1.2+ or CD3+ cells in peripheral blood, spleen or thymus, or in NK1.1+ cells in spleen (at protein level). Widely expressed in various tissues including heart, liver, spleen, lung, kidney, brain, bone marrow, thymus, axillary lymph node and mesenteric lymph node. Highly expressed in macrophage cell lines J774.1 and RAW 264.7 and in mast cell line MC/9. Weak expression detected in B-lineage cell lines WEHI-231 and A20 and in dendritic cell line DC2.4. Not detected in other myeloid cell lines or T-lineage cell lines.

It localises to the cell membrane. The protein localises to the early endosome. The protein resides in the lysosome. Its function is as follows. Acts as an activating receptor inducing cytokine production in mast cells. Can act as a positive regulator of TLR9 signaling in macrophages, leading to enhanced production of pro-inflammatory cytokines. This Mus musculus (Mouse) protein is CMRF35-like molecule 3.